Here is a 61-residue protein sequence, read N- to C-terminus: Sperm protamine P1 (61 aa).

Residues 1-61 (MARYRHSRSR…RYSRRRRRRY (61 aa)) are disordered.

The protein belongs to the protamine P1 family. Testis.

Its subcellular location is the nucleus. The protein localises to the chromosome. Functionally, protamines substitute for histones in the chromatin of sperm during the haploid phase of spermatogenesis. They compact sperm DNA into a highly condensed, stable and inactive complex. The protein is Sperm protamine P1 (PRM1) of Setonix brachyurus (Quokka).